Reading from the N-terminus, the 410-residue chain is LL-diaminopimelate aminotransferase (410 aa).

Residues Tyr-15 and Gly-42 each contribute to the substrate site. Residues Tyr-72, 108-109, Tyr-132, Asn-188, Tyr-219, and 247-249 each bind pyridoxal 5'-phosphate; these read AK and SFS. Residues Lys-109, Tyr-132, and Asn-188 each contribute to the substrate site. Lys-250 is subject to N6-(pyridoxal phosphate)lysine. The pyridoxal 5'-phosphate site is built by Arg-258 and Asn-293. Substrate contacts are provided by Asn-293 and Arg-389.

Belongs to the class-I pyridoxal-phosphate-dependent aminotransferase family. LL-diaminopimelate aminotransferase subfamily. In terms of assembly, homodimer. Pyridoxal 5'-phosphate serves as cofactor.

It carries out the reaction (2S,6S)-2,6-diaminopimelate + 2-oxoglutarate = (S)-2,3,4,5-tetrahydrodipicolinate + L-glutamate + H2O + H(+). The protein operates within amino-acid biosynthesis; L-lysine biosynthesis via DAP pathway; LL-2,6-diaminopimelate from (S)-tetrahydrodipicolinate (aminotransferase route): step 1/1. In terms of biological role, involved in the synthesis of meso-diaminopimelate (m-DAP or DL-DAP), required for both lysine and peptidoglycan biosynthesis. Catalyzes the direct conversion of tetrahydrodipicolinate to LL-diaminopimelate. Can also use m-DAP instead of LL-DAP as the amino-group donor. The sequence is that of LL-diaminopimelate aminotransferase from Bacteroides fragilis (strain ATCC 25285 / DSM 2151 / CCUG 4856 / JCM 11019 / LMG 10263 / NCTC 9343 / Onslow / VPI 2553 / EN-2).